Consider the following 426-residue polypeptide: Gamma-glutamyl phosphate reductase (426 aa).

The protein belongs to the gamma-glutamyl phosphate reductase family.

It is found in the cytoplasm. It carries out the reaction L-glutamate 5-semialdehyde + phosphate + NADP(+) = L-glutamyl 5-phosphate + NADPH + H(+). The protein operates within amino-acid biosynthesis; L-proline biosynthesis; L-glutamate 5-semialdehyde from L-glutamate: step 2/2. Its function is as follows. Catalyzes the NADPH-dependent reduction of L-glutamate 5-phosphate into L-glutamate 5-semialdehyde and phosphate. The product spontaneously undergoes cyclization to form 1-pyrroline-5-carboxylate. The sequence is that of Gamma-glutamyl phosphate reductase from Cupriavidus pinatubonensis (strain JMP 134 / LMG 1197) (Cupriavidus necator (strain JMP 134)).